Reading from the N-terminus, the 226-residue chain is Phosphoglycolate phosphatase (226 aa).

Asp9 (nucleophile) is an active-site residue. 2 residues coordinate Mg(2+): Asp9 and Asp11. A substrate-binding site is contributed by Lys150. Mg(2+)-binding residues include Asp173 and Asp177.

This sequence belongs to the archaeal SPP-like hydrolase family. Requires Mg(2+) as cofactor.

It carries out the reaction 2-phosphoglycolate + H2O = glycolate + phosphate. Functionally, catalyzes the dephosphorylation of 2-phosphoglycolate. This chain is Phosphoglycolate phosphatase, found in Methanosarcina acetivorans (strain ATCC 35395 / DSM 2834 / JCM 12185 / C2A).